A 292-amino-acid chain; its full sequence is Nitrogenase iron protein 2 (292 aa).

12–19 lines the ATP pocket; that stretch reads GKGGIGKS. A [4Fe-4S] cluster-binding site is contributed by Cys97. Arg100 carries the ADP-ribosylarginine; by dinitrogenase reductase ADP-ribosyltransferase modification. Cys133 serves as a coordination point for [4Fe-4S] cluster.

It belongs to the NifH/BchL/ChlL family. As to quaternary structure, homodimer. The cofactor is [4Fe-4S] cluster. The reversible ADP-ribosylation of Arg-100 inactivates the nitrogenase reductase and regulates nitrogenase activity.

It carries out the reaction N2 + 8 reduced [2Fe-2S]-[ferredoxin] + 16 ATP + 16 H2O = H2 + 8 oxidized [2Fe-2S]-[ferredoxin] + 2 NH4(+) + 16 ADP + 16 phosphate + 6 H(+). The key enzymatic reactions in nitrogen fixation are catalyzed by the nitrogenase complex, which has 2 components: the iron protein and the molybdenum-iron protein. This is Nitrogenase iron protein 2 (nifH2) from Paenibacillus durus (Paenibacillus azotofixans).